Reading from the N-terminus, the 330-residue chain is Glycerol-3-phosphate dehydrogenase [NAD(P)+] (330 aa).

NADPH-binding residues include Trp-11, Arg-31, His-32, and Lys-105. 2 residues coordinate sn-glycerol 3-phosphate: Lys-105 and Gly-133. Ala-137 contacts NADPH. Residues Lys-188, Asp-241, Ser-251, Arg-252, and Asn-253 each contribute to the sn-glycerol 3-phosphate site. Lys-188 serves as the catalytic Proton acceptor. Residue Arg-252 participates in NADPH binding. Residues Leu-277 and Glu-279 each contribute to the NADPH site.

Belongs to the NAD-dependent glycerol-3-phosphate dehydrogenase family.

Its subcellular location is the cytoplasm. The enzyme catalyses sn-glycerol 3-phosphate + NAD(+) = dihydroxyacetone phosphate + NADH + H(+). It catalyses the reaction sn-glycerol 3-phosphate + NADP(+) = dihydroxyacetone phosphate + NADPH + H(+). The protein operates within membrane lipid metabolism; glycerophospholipid metabolism. In terms of biological role, catalyzes the reduction of the glycolytic intermediate dihydroxyacetone phosphate (DHAP) to sn-glycerol 3-phosphate (G3P), the key precursor for phospholipid synthesis. This Orientia tsutsugamushi (strain Boryong) (Rickettsia tsutsugamushi) protein is Glycerol-3-phosphate dehydrogenase [NAD(P)+].